Reading from the N-terminus, the 295-residue chain is Succinate dehydrogenase [ubiquinone] iron-sulfur subunit, mitochondrial (295 aa).

Positions 67-144 constitute a 2Fe-2S ferredoxin-type domain; that stretch reads EKPRLQSYTL…DTKIYPLPHM (78 aa). Residues Cys-106, Cys-111, Cys-114, and Cys-126 each contribute to the [2Fe-2S] cluster site. Residues 185–215 form the 4Fe-4S ferredoxin-type domain; sequence ERRRLDGLYECILCACCSTSCPSYWWNQDEY. Positions 195, 198, and 201 each coordinate [4Fe-4S] cluster. Residue Cys-205 coordinates [3Fe-4S] cluster. Residue Trp-210 participates in a ubiquinone binding. Residues Cys-252 and Cys-258 each coordinate [3Fe-4S] cluster. Cys-262 provides a ligand contact to [4Fe-4S] cluster.

The protein belongs to the succinate dehydrogenase/fumarate reductase iron-sulfur protein family. Component of complex II composed of four subunits: a flavoprotein (FP), an iron-sulfur protein (IP), and a cytochrome b composed of a large and a small subunit. It depends on [2Fe-2S] cluster as a cofactor. The cofactor is [3Fe-4S] cluster. [4Fe-4S] cluster serves as cofactor.

The protein resides in the mitochondrion inner membrane. It catalyses the reaction a quinone + succinate = fumarate + a quinol. Its pathway is carbohydrate metabolism; tricarboxylic acid cycle; fumarate from succinate (eukaryal route): step 1/1. Functionally, iron-sulfur protein (IP) subunit of succinate dehydrogenase (SDH) that is involved in complex II of the mitochondrial electron transport chain and is responsible for transferring electrons from succinate to ubiquinone (coenzyme Q). The polypeptide is Succinate dehydrogenase [ubiquinone] iron-sulfur subunit, mitochondrial (SDH2) (Mycosarcoma maydis (Corn smut fungus)).